Consider the following 303-residue polypeptide: Cytidine deaminase (303 aa).

CMP/dCMP-type deaminase domains lie at 57-172 and 196-303; these read TDKE…YLPD and ITED…IQVS. A substrate-binding site is contributed by 98–100; that stretch reads NQE. Histidine 111 is a Zn(2+) binding site. The active-site Proton donor is the glutamate 113. Residues cysteine 138 and cysteine 141 each coordinate Zn(2+).

This sequence belongs to the cytidine and deoxycytidylate deaminase family. As to quaternary structure, homodimer. It depends on Zn(2+) as a cofactor.

The enzyme catalyses cytidine + H2O + H(+) = uridine + NH4(+). It catalyses the reaction 2'-deoxycytidine + H2O + H(+) = 2'-deoxyuridine + NH4(+). Its function is as follows. This enzyme scavenges exogenous and endogenous cytidine and 2'-deoxycytidine for UMP synthesis. This is Cytidine deaminase from Histophilus somni (strain 2336) (Haemophilus somnus).